The following is a 405-amino-acid chain: Coiled-coil domain-containing protein 91 (405 aa).

The segment at 1 to 16 (MDDDDFGGFEAAETFD) is GGA1-binding motif. A disordered region spans residues 1–27 (MDDDDFGGFEAAETFDGGNGETQTTSP). Phosphoserine occurs at positions 43 and 46. Residues 126–376 (GANVSNIQLR…QKRLDQVIRQ (251 aa)) adopt a coiled-coil conformation. The tract at residues 210–377 (LSIIVDEYKH…KRLDQVIRQR (168 aa)) is homodimerization.

In terms of assembly, homodimer. Interacts with GGA1, GGA2 and AP1G1.

It localises to the membrane. The protein resides in the golgi apparatus. Its subcellular location is the trans-Golgi network membrane. The protein localises to the trans-Golgi network. Involved in the regulation of membrane traffic through the trans-Golgi network (TGN). Functions in close cooperation with the GGAs in the sorting of hydrolases to lysosomes. The polypeptide is Coiled-coil domain-containing protein 91 (CCDC91) (Pongo abelii (Sumatran orangutan)).